A 171-amino-acid polypeptide reads, in one-letter code: Putative phosphoesterase BPUM_1117 (171 aa).

Residue H34 is the Proton donor of the active site. 2 short sequence motifs (HXTX) span residues 34–37 and 115–118; these read HLTL and HVTV. The active-site Proton acceptor is H115.

The protein belongs to the 2H phosphoesterase superfamily. YjcG family.

The chain is Putative phosphoesterase BPUM_1117 from Bacillus pumilus (strain SAFR-032).